A 648-amino-acid chain; its full sequence is Rab11 family-interacting protein 1 (648 aa).

The C2 domain occupies 1-129 (MSLAASAGRG…DQSRRKKQWY (129 aa)). Over residues 164-188 (SMKDKSRNPFGKLKDKIKGKNKDNT) the composition is skewed to basic and acidic residues. 3 disordered regions span residues 164-470 (SMKD…GRKG), 483-503 (VRRP…SQNP), and 516-555 (VESK…PKIT). Positions 189–201 (SDTASAIVPSTTP) are enriched in polar residues. Residues S205, S209, and S237 each carry the phosphoserine modification. Composition is skewed to polar residues over residues 227–242 (PSLQ…SVLP) and 271–296 (SSAS…SNFS). Phosphoserine is present on residues S304, S319, S343, S345, S347, S349, S360, S361, and S386. Positions 314–323 (DSLSRSNVCI) are enriched in polar residues. Basic and acidic residues-rich tracts occupy residues 381–394 (SDRR…KDSM) and 422–436 (ATKE…ESKK). S438 carries the post-translational modification Phosphoserine. Over residues 445–454 (GKKDVAKGSE) the composition is skewed to basic and acidic residues. An FIP-RBD domain is found at 576–638 (KKYQPSDPAF…EETPNILRVP (63 aa)). The segment at 584 to 648 (AFAYAQLTHD…AQTGKKAGKM (65 aa)) is necessary for interaction with RAB4A and RAB11A, subcellular location and endosomal recycling.

As to quaternary structure, homooligomer. Interacts with RAB11A, RAB11B, RAB25, RAB4A and RAB14.

It localises to the recycling endosome. The protein resides in the cytoplasmic vesicle. Its function is as follows. A Rab11 effector protein involved in the endosomal recycling process. Also involved in controlling membrane trafficking along the phagocytic pathway and in phagocytosis. Interaction with RAB14 may function in the process of neurite formation. This chain is Rab11 family-interacting protein 1, found in Rattus norvegicus (Rat).